The chain runs to 1386 residues: Rab3 GTPase-activating protein non-catalytic subunit (1386 aa).

The disordered stretch occupies residues 31–69 (GALRRDPSKTSNWEDDSWGAWEETEPQEPEEEGNTSKTQ). Ser38 is modified (phosphoserine). The span at 43–63 (WEDDSWGAWEETEPQEPEEEG) shows a compositional bias: acidic residues. Ser448 carries the post-translational modification Phosphoserine. Thr899 is subject to Phosphothreonine. At Ser914 the chain carries Phosphoserine. Residues 959 to 973 (REKDVENPDEPREGI) are compositionally biased toward basic and acidic residues. The segment at 959-982 (REKDVENPDEPREGIARSPPEVSE) is disordered. Position 976 is a phosphoserine (Ser976).

The protein belongs to the Rab3-GAP regulatory subunit family. The Rab3 GTPase-activating complex is a heterodimer composed of Rab3gap1 and Rab3gap2. The Rab3 GTPase-activating complex interacts with DMXL2. Interacts with LMAN1.

Its subcellular location is the cytoplasm. The protein localises to the endoplasmic reticulum. Functionally, regulatory subunit of the Rab3 GTPase-activating (Rab3GAP) complex composed of RAB3GAP1 and RAB3GAP2, which has GTPase-activating protein (GAP) activity towards various Rab3 subfamily members (RAB3A, RAB3B, RAB3C and RAB3D), RAB5A and RAB43, and guanine nucleotide exchange factor (GEF) activity towards RAB18. As part of the Rab3GAP complex, acts as a GAP for Rab3 proteins by converting active RAB3-GTP to the inactive form RAB3-GDP. Rab3 proteins are involved in regulated exocytosis of neurotransmitters and hormones. The Rab3GAP complex acts as a GEF for RAB18 by promoting the conversion of inactive RAB18-GDP to the active form RAB18-GTP. Recruits and stabilizes RAB18 at the cis-Golgi membrane in fibroblasts where RAB18 is most likely activated. Also involved in RAB18 recruitment at the endoplasmic reticulum (ER) membrane where it maintains proper ER structure. Required for normal eye and brain development. May participate in neurodevelopmental processes such as proliferation, migration and differentiation before synapse formation, and non-synaptic vesicular release of neurotransmitters. The polypeptide is Rab3 GTPase-activating protein non-catalytic subunit (Rattus norvegicus (Rat)).